A 633-amino-acid chain; its full sequence is MGANSKSVTASFTVIAVFFLICGGRTAVEDETEFHGDYSKLSGIIIPGFASTQLRAWSILDCPYTPLDFNPLDLVWLDTTKLLSAVNCWFKCMVLDPYNQTDHPECKSRPDSGLSAITELDPGYITGPLSTVWKEWLKWCVEFGIEANAIVAVPYDWRLSPTKLEERDLYFHKLKLTFETALKLRGGPSIVFAHSMGNNVFRYFLEWLRLEIAPKHYLKWLDQHIHAYFAVGAPLLGSVEAIKSTLSGVTFGLPVSEGTARLLSNSFASSLWLMPFSKNCKGDNTFWTHFSGGAAKKDKRVYHCDEEEYQSKYSGWPTNIINIEIPSTSVTETALVNMTSMECGLPTLLSFTARELADGTLFKAIEDYDPDSKRMLHQLKKLYHDDPVFNPLTPWERPPIKNVFCIYGAHLKTEVGYYFAPSGKPYPDNWIITDIIYETEGSLVSRSGTVVDGNAGPITGDETVPYHSLSWCKNWLGPKVNITMAPQPEHDGSDVHVELNVDHEHGSDIIANMTKAPRVKYITFYEDSESIPGKRTAVWELDKTNHRNIVRSPVLMRELWLQMWHDIQPGAKSKFVTKAKRGPLRDADCYWDYGKACCAWQEYCEYRYSFGDVHLGQSCRLRNTSANMLLQYI.

Topologically, residues 1-6 (MGANSK) are cytoplasmic. The helical; Signal-anchor for type II membrane protein transmembrane segment at 7–29 (SVTASFTVIAVFFLICGGRTAVE) threads the bilayer. Topologically, residues 30–633 (DETEFHGDYS…TSANMLLQYI (604 aa)) are lumenal. The active-site Acyl-ester intermediate is the Ser195. Residues Asp461 and His505 each act as charge relay system in the active site.

It belongs to the AB hydrolase superfamily. Lipase family.

Its subcellular location is the microsome membrane. Its function is as follows. Involved in lipid catabolism. Essential for sterol esters biosynthesis in leaves and seeds, but not in flowers. Plays a role in controlling the free sterol content of leaves. Catalyzes the transacylation of acyl groups from phospholipids to a variety of different sterols. Prefers phosphatidylethanolamine over phosphatidylcholine as an acyl donor. Not active toward neutral lipids. Highly specific for position sn-2, which in plant lipids is essentially devoid of saturated acyl groups. Broad sterol specificity (cholesterol &gt; campesterol &gt; sitosterol &gt; stigmasterol), but no activity with lupeol or beta-amyrin. In Arabidopsis thaliana (Mouse-ear cress), this protein is Phospholipid--sterol O-acyltransferase (PSAT).